Here is a 303-residue protein sequence, read N- to C-terminus: Cyclin-dependent kinase B1-1 (303 aa).

One can recognise a Protein kinase domain in the interval 4–295 (YEKLEKVGEG…AKAAMEHPYF (292 aa)). ATP is bound by residues 10 to 18 (VGEGTYGKV) and K33. The residue at position 14 (T14) is a Phosphothreonine. Y15 bears the Phosphotyrosine mark. D136 (proton acceptor) is an active-site residue. Phosphothreonine is present on T170.

This sequence belongs to the protein kinase superfamily. CMGC Ser/Thr protein kinase family. CDC2/CDKX subfamily. As to expression, expressed in actively dividing cells: root and shoot apical meristems, and young leaves.

It carries out the reaction L-seryl-[protein] + ATP = O-phospho-L-seryl-[protein] + ADP + H(+). The enzyme catalyses L-threonyl-[protein] + ATP = O-phospho-L-threonyl-[protein] + ADP + H(+). It catalyses the reaction [DNA-directed RNA polymerase] + ATP = phospho-[DNA-directed RNA polymerase] + ADP + H(+). In Oryza sativa subsp. japonica (Rice), this protein is Cyclin-dependent kinase B1-1 (CDKB1-1).